The primary structure comprises 680 residues: 1-deoxy-D-xylulose-5-phosphate synthase (680 aa).

Over residues 1-17 (MQQSPHSPQSQSLSASA) the composition is skewed to low complexity. The tract at residues 1-20 (MQQSPHSPQSQSLSASAVDS) is disordered. Thiamine diphosphate contacts are provided by residues histidine 113 and 154 to 156 (GHS). Aspartate 185 lines the Mg(2+) pocket. Residues 186–187 (GA), asparagine 214, phenylalanine 323, and glutamate 408 each bind thiamine diphosphate. Residue asparagine 214 participates in Mg(2+) binding.

Belongs to the transketolase family. DXPS subfamily. In terms of assembly, homodimer. Mg(2+) serves as cofactor. The cofactor is thiamine diphosphate.

The enzyme catalyses D-glyceraldehyde 3-phosphate + pyruvate + H(+) = 1-deoxy-D-xylulose 5-phosphate + CO2. It functions in the pathway metabolic intermediate biosynthesis; 1-deoxy-D-xylulose 5-phosphate biosynthesis; 1-deoxy-D-xylulose 5-phosphate from D-glyceraldehyde 3-phosphate and pyruvate: step 1/1. Functionally, catalyzes the acyloin condensation reaction between C atoms 2 and 3 of pyruvate and glyceraldehyde 3-phosphate to yield 1-deoxy-D-xylulose-5-phosphate (DXP). The protein is 1-deoxy-D-xylulose-5-phosphate synthase of Psychrobacter cryohalolentis (strain ATCC BAA-1226 / DSM 17306 / VKM B-2378 / K5).